We begin with the raw amino-acid sequence, 130 residues long: uncharacterized protein (130 aa).

This is an uncharacterized protein from Acanthamoeba polyphaga mimivirus (APMV).